Consider the following 449-residue polypeptide: UDP-N-acetylmuramate--L-alanine ligase (449 aa).

Residue 110-116 (GTHGKTT) coordinates ATP.

The protein belongs to the MurCDEF family.

It localises to the cytoplasm. It carries out the reaction UDP-N-acetyl-alpha-D-muramate + L-alanine + ATP = UDP-N-acetyl-alpha-D-muramoyl-L-alanine + ADP + phosphate + H(+). It functions in the pathway cell wall biogenesis; peptidoglycan biosynthesis. In terms of biological role, cell wall formation. The polypeptide is UDP-N-acetylmuramate--L-alanine ligase (Desulfitobacterium hafniense (strain Y51)).